Reading from the N-terminus, the 123-residue chain is Photosystem II extrinsic protein U (123 aa).

The first 28 residues, 1-28 (MKTLARILVVFTLIVGLIGFFNPLPAQA), serve as a signal peptide directing secretion.

The protein belongs to the PsbU family. In terms of assembly, PSII is composed of 1 copy each of membrane proteins PsbA, PsbB, PsbC, PsbD, PsbE, PsbF, PsbH, PsbI, PsbJ, PsbK, PsbL, PsbM, PsbT, PsbX, PsbY, PsbZ, Psb30/Ycf12, peripheral proteins PsbO, CyanoQ (PsbQ), PsbU, PsbV and a large number of cofactors. It forms dimeric complexes.

It localises to the cellular thylakoid membrane. Its function is as follows. One of the extrinsic, lumenal subunits of photosystem II (PSII). PSII is a light-driven water plastoquinone oxidoreductase, using light energy to abstract electrons from H(2)O, generating a proton gradient subsequently used for ATP formation. The extrinsic proteins stabilize the structure of photosystem II oxygen-evolving complex (OEC), the ion environment of oxygen evolution and protect the OEC against heat-induced inactivation. This is Photosystem II extrinsic protein U from Gloeothece citriformis (strain PCC 7424) (Cyanothece sp. (strain PCC 7424)).